Consider the following 363-residue polypeptide: Chalcone synthase B (363 aa).

Cys-170 is a catalytic residue.

Belongs to the thiolase-like superfamily. Chalcone/stilbene synthases family.

It carries out the reaction (E)-4-coumaroyl-CoA + 3 malonyl-CoA + 3 H(+) = 2',4,4',6'-tetrahydroxychalcone + 3 CO2 + 4 CoA. It participates in secondary metabolite biosynthesis; flavonoid biosynthesis. The primary product of this enzyme is 4,2',4',6'-tetrahydroxychalcone (also termed naringenin-chalcone or chalcone) which can under specific conditions spontaneously isomerize into naringenin. The sequence is that of Chalcone synthase B (CHSB) from Ipomoea cordatotriloba (Tievine).